A 75-amino-acid chain; its full sequence is Large ribosomal subunit protein bL31 (75 aa).

Zn(2+)-binding residues include cysteine 16, cysteine 18, cysteine 37, and cysteine 40.

Belongs to the bacterial ribosomal protein bL31 family. Type A subfamily. Part of the 50S ribosomal subunit. It depends on Zn(2+) as a cofactor.

Its function is as follows. Binds the 23S rRNA. This Nitrosospira multiformis (strain ATCC 25196 / NCIMB 11849 / C 71) protein is Large ribosomal subunit protein bL31.